The sequence spans 213 residues: Probable GH family 25 lysozyme 4 (213 aa).

The first 19 residues, 1-19, serve as a signal peptide directing secretion; that stretch reads MRLFLLLITFIALFGAINA. The Ch-type lysozyme domain maps to 21–213; sequence SGVDISQGSS…VGYDFNWYPN (193 aa). Catalysis depends on residues Asp24, Asp112, and Glu114.

The protein belongs to the glycosyl hydrolase 25 family.

It localises to the secreted. The enzyme catalyses Hydrolysis of (1-&gt;4)-beta-linkages between N-acetylmuramic acid and N-acetyl-D-glucosamine residues in a peptidoglycan and between N-acetyl-D-glucosamine residues in chitodextrins.. The chain is Probable GH family 25 lysozyme 4 from Dictyostelium discoideum (Social amoeba).